Reading from the N-terminus, the 303-residue chain is Probable cell division protein WhiA (303 aa).

Residues 272–303 constitute a DNA-binding region (H-T-H motif); that stretch reads SIQQLADSLSTPLTKSGVNHRLRKINKIADEL.

The protein belongs to the WhiA family.

Its function is as follows. Involved in cell division and chromosome segregation. This Streptococcus pneumoniae (strain ATCC 700669 / Spain 23F-1) protein is Probable cell division protein WhiA.